Consider the following 291-residue polypeptide: Taste receptor type 2 member 16 (291 aa).

Met-1 is a topological domain (extracellular). A helical membrane pass occupies residues 2–22 (IPIQLTVFFMIIYVLESLTII). Residues 23–41 (VQSSLIVAVLGREWLQVRR) are Cytoplasmic-facing. Residues 42–62 (LMPVDMILISLGISRFCLQWA) traverse the membrane as a helical segment. At 63–84 (SMLNNFCSYLNLNYVLCNLTIT) the chain is on the extracellular side. Asn-80 carries N-linked (GlcNAc...) asparagine glycosylation. A helical membrane pass occupies residues 85-105 (WEFFNILTFWLNSLLTVFYCI). The Cytoplasmic portion of the chain corresponds to 106–125 (KVSSFTHHIFLWVRWRILRW). Residues 126–146 (FPWILLGSLTIACVTIIPSAI) traverse the membrane as a helical segment. Residues 147-182 (GNYIQIQLLTMEHLPRNSTVTDRLEKFHQYQFQSHT) are Extracellular-facing. N-linked (GlcNAc...) asparagine glycosylation is present at Asn-163. Residues 183–203 (VALVIPFILFLASTILLMASL) form a helical membrane-spanning segment. Over 204 to 228 (TKQIQHHSTGHCNPSMKAHFTALRS) the chain is Cytoplasmic. Residues 229-249 (LAILFIVFTSYFLIILITIIG) traverse the membrane as a helical segment. Topologically, residues 250–257 (TLFDKRCW) are extracellular. The helical transmembrane segment at 258 to 278 (LWVWEAFVYAFILMHSTSLML) threads the bilayer. Topologically, residues 279–291 (SSPTLKRILKGKC) are cytoplasmic.

The protein belongs to the G-protein coupled receptor T2R family. Interacts with RTP3 and RTP4.

It localises to the cell membrane. Functionally, receptor that may play a role in the perception of bitterness and is gustducin-linked. May function as a bitter taste receptor for the phytonutrient beta glucopyranosides, some of which are toxic and some of which lower the risk of cancer and cardiovascular disease. The activity of this receptor may stimulate alpha gustducin, mediate PLC-beta-2 activation and lead to the gating of TRPM5. In Pongo pygmaeus (Bornean orangutan), this protein is Taste receptor type 2 member 16 (TAS2R16).